Here is a 288-residue protein sequence, read N- to C-terminus: Bifunctional protein FolD (288 aa).

NADP(+) contacts are provided by residues 166–168, serine 191, and valine 232; that span reads GRS.

This sequence belongs to the tetrahydrofolate dehydrogenase/cyclohydrolase family. As to quaternary structure, homodimer.

The enzyme catalyses (6R)-5,10-methylene-5,6,7,8-tetrahydrofolate + NADP(+) = (6R)-5,10-methenyltetrahydrofolate + NADPH. The catalysed reaction is (6R)-5,10-methenyltetrahydrofolate + H2O = (6R)-10-formyltetrahydrofolate + H(+). It participates in one-carbon metabolism; tetrahydrofolate interconversion. Catalyzes the oxidation of 5,10-methylenetetrahydrofolate to 5,10-methenyltetrahydrofolate and then the hydrolysis of 5,10-methenyltetrahydrofolate to 10-formyltetrahydrofolate. In Roseiflexus sp. (strain RS-1), this protein is Bifunctional protein FolD.